A 102-amino-acid polypeptide reads, in one-letter code: Colipase-like protein 2 (102 aa).

Residues 1 to 23 (MAFTQALVTVLALLAGTLPHRHS) form the signal peptide. 5 disulfides stabilise this stretch: Cys-36-Cys-47, Cys-42-Cys-58, Cys-46-Cys-80, Cys-68-Cys-88, and Cys-82-Cys-99.

Belongs to the colipase family.

Its subcellular location is the secreted. This chain is Colipase-like protein 2 (Clpsl2), found in Mus musculus (Mouse).